Consider the following 176-residue polypeptide: Translation initiation factor IF-3 (176 aa).

It belongs to the IF-3 family. Monomer.

The protein resides in the cytoplasm. Its function is as follows. IF-3 binds to the 30S ribosomal subunit and shifts the equilibrium between 70S ribosomes and their 50S and 30S subunits in favor of the free subunits, thus enhancing the availability of 30S subunits on which protein synthesis initiation begins. The polypeptide is Translation initiation factor IF-3 (Microcystis aeruginosa (strain NIES-843 / IAM M-2473)).